We begin with the raw amino-acid sequence, 78 residues long: D-alanyl carrier protein (78 aa).

The Carrier domain occupies 1–78 (MEFREQVLNL…KIVEALEELR (78 aa)). O-(pantetheine 4'-phosphoryl)serine is present on serine 36.

It belongs to the DltC family. 4'-phosphopantetheine is transferred from CoA to a specific serine of apo-DCP.

Its subcellular location is the cytoplasm. The protein operates within cell wall biogenesis; lipoteichoic acid biosynthesis. Its function is as follows. Carrier protein involved in the D-alanylation of lipoteichoic acid (LTA). The loading of thioester-linked D-alanine onto DltC is catalyzed by D-alanine--D-alanyl carrier protein ligase DltA. The DltC-carried D-alanyl group is further transferred to cell membrane phosphatidylglycerol (PG) by forming an ester bond, probably catalyzed by DltD. D-alanylation of LTA plays an important role in modulating the properties of the cell wall in Gram-positive bacteria, influencing the net charge of the cell wall. In Staphylococcus aureus (strain Mu50 / ATCC 700699), this protein is D-alanyl carrier protein.